We begin with the raw amino-acid sequence, 574 residues long: Septation ring formation regulator EzrA (574 aa).

The Extracellular segment spans residues 1-7; it reads MSSGIIL. Residues 8 to 26 form a helical membrane-spanning segment; that stretch reads LLVAIVLLVIIAYVVGVVI. Over 27–574 the chain is Cytoplasmic; sequence RKRNDTLIAN…YEKTQERIRF (548 aa). Coiled-coil stretches lie at residues 104-141, 275-343, and 473-525; these read VRAK…EEKN, LVSL…SAKY, and DIEA…VQKS.

It belongs to the EzrA family.

The protein resides in the cell membrane. Negative regulator of FtsZ ring formation; modulates the frequency and position of FtsZ ring formation. Inhibits FtsZ ring formation at polar sites. Interacts either with FtsZ or with one of its binding partners to promote depolymerization. The chain is Septation ring formation regulator EzrA from Streptococcus agalactiae serotype III (strain NEM316).